Here is a 704-residue protein sequence, read N- to C-terminus: Tryptophan synthase (704 aa).

The segment at 1 to 292 (MEAIKKVFEQ…QLTPNAETAK (292 aa)) is tryptophan synthase alpha chain. Residues Glu-49 and Asp-60 each act as proton acceptor in the active site. The interval 293 to 704 (GVENILPARF…HVSSNAIPSK (412 aa)) is tryptophan synthase beta chain. Lys-380 carries the post-translational modification N6-(pyridoxal phosphate)lysine.

This sequence in the N-terminal section; belongs to the TrpA family. In the C-terminal section; belongs to the TrpB family. Pyridoxal 5'-phosphate is required as a cofactor.

It catalyses the reaction (1S,2R)-1-C-(indol-3-yl)glycerol 3-phosphate + L-serine = D-glyceraldehyde 3-phosphate + L-tryptophan + H2O. It functions in the pathway amino-acid biosynthesis; L-tryptophan biosynthesis; L-tryptophan from chorismate: step 5/5. This is Tryptophan synthase (TRP-1) from Coprinopsis cinerea (strain Okayama-7 / 130 / ATCC MYA-4618 / FGSC 9003) (Inky cap fungus).